The chain runs to 208 residues: Uracil phosphoribosyltransferase (208 aa).

5-phospho-alpha-D-ribose 1-diphosphate is bound by residues Arg-78, Arg-103, and 130-138; that span reads DPMLATGGS. Residues Ile-193 and 198-200 each bind uracil; that span reads GDA. Residue Asp-199 coordinates 5-phospho-alpha-D-ribose 1-diphosphate.

It belongs to the UPRTase family. Mg(2+) is required as a cofactor.

It catalyses the reaction UMP + diphosphate = 5-phospho-alpha-D-ribose 1-diphosphate + uracil. Its pathway is pyrimidine metabolism; UMP biosynthesis via salvage pathway; UMP from uracil: step 1/1. With respect to regulation, allosterically activated by GTP. Its function is as follows. Catalyzes the conversion of uracil and 5-phospho-alpha-D-ribose 1-diphosphate (PRPP) to UMP and diphosphate. This Desulfovibrio desulfuricans (strain ATCC 27774 / DSM 6949 / MB) protein is Uracil phosphoribosyltransferase.